The chain runs to 266 residues: 4-hydroxy-tetrahydrodipicolinate reductase (266 aa).

Residues 8-13 and glutamate 33 each bind NAD(+); that span reads GAAGRM. An NADP(+)-binding site is contributed by arginine 34. Residues 97–99 and 121–124 contribute to the NAD(+) site; these read GST and APNM. Histidine 154 functions as the Proton donor/acceptor in the catalytic mechanism. Histidine 155 serves as a coordination point for (S)-2,3,4,5-tetrahydrodipicolinate. The active-site Proton donor is lysine 158. Position 164–165 (164–165) interacts with (S)-2,3,4,5-tetrahydrodipicolinate; the sequence is GT.

This sequence belongs to the DapB family.

The protein resides in the cytoplasm. It carries out the reaction (S)-2,3,4,5-tetrahydrodipicolinate + NAD(+) + H2O = (2S,4S)-4-hydroxy-2,3,4,5-tetrahydrodipicolinate + NADH + H(+). The enzyme catalyses (S)-2,3,4,5-tetrahydrodipicolinate + NADP(+) + H2O = (2S,4S)-4-hydroxy-2,3,4,5-tetrahydrodipicolinate + NADPH + H(+). It functions in the pathway amino-acid biosynthesis; L-lysine biosynthesis via DAP pathway; (S)-tetrahydrodipicolinate from L-aspartate: step 4/4. Functionally, catalyzes the conversion of 4-hydroxy-tetrahydrodipicolinate (HTPA) to tetrahydrodipicolinate. In Trichlorobacter lovleyi (strain ATCC BAA-1151 / DSM 17278 / SZ) (Geobacter lovleyi), this protein is 4-hydroxy-tetrahydrodipicolinate reductase.